A 201-amino-acid polypeptide reads, in one-letter code: Ribonuclease MRP protein subunit RMP1 (201 aa).

Residues 86–108 form a helical membrane-spanning segment; that stretch reads YWQFNGVIALGQFVTLGCTLVTL.

As to quaternary structure, component of RNase MRP complex which consists of an RNA moiety and at least 10 protein subunits including POP1, POP3, POP4, POP5, POP6, POP7, POP8, RMP1, RPP1 and SNM1, many of which are shared with the RNase P complex.

It localises to the membrane. The protein resides in the cytoplasm. The protein localises to the nucleus. Its function is as follows. Functions as part of ribonuclease MRP (RNase MRP), which is involved in rRNA processing in mitochondria. In Saccharomyces cerevisiae (strain ATCC 204508 / S288c) (Baker's yeast), this protein is Ribonuclease MRP protein subunit RMP1.